The sequence spans 580 residues: MDGPDQIGPDVRPRRTFGDRVRRAARAFTTRDGLIGDYDYGFLFTPRLPFVKQKRRAAPFFGLEDKIPLVLALLLGLQHALAMLAGVITPPILLAGSSGANFGADESQYLVSTSLIVSGLLSAVQMFRLHVYKTRYYVGTGLVSVVGTSFATITVATGTFNQMYSTGYCPVDGSGNRLPCPKGYGALLATSCLCSLLEIGLSFMSSRLLKALFPPIVTGPTVFLIGASLIGNAMKDWAGGSGTCSSNPGNGALCPSADAPHPLPWGSAEFIGLGFLVFATIILCERFGSPIMKSCAVIVGLLVGCIVAAACGYFDRSGIDAAPVASFIWVKTFPLTIYAPLILPLLAVYMVIMMESIGDITATCDVSRLQVEGATFDSRIQGGVLGNGITCLLAGLCTITPMSVFAQNNGVIALTRCANRKAGYCCCFFLVVMGIFAKFAAALVAIPSSVLGGMTTFLFSSVAISGVRIMCSVDWTRRNRFILTASFAVGMAATLVPDWFSYFFTYSGDNHALEGLLQAVELVMANGFAVTGFLGLLLNLILPEDMEEDVVESEEDYEATTVVGMQGGSEPGSSGQNVKA.

The next 12 helical transmembrane spans lie at 68–88, 107–127, 136–156, 184–204, 211–231, 263–283, 294–314, 385–405, 426–446, 447–467, 481–501, and 522–542; these read PLVL…AGVI, SQYL…VQMF, YYVG…ITVA, YGAL…LSFM, ALFP…SLIG, LPWG…TIIL, SCAV…CGYF, LGNG…MSVF, CCFF…LVAI, PSSV…ISGV, FILT…DWFS, and LVMA…NLIL.

It belongs to the nucleobase:cation symporter-2 (NCS2) (TC 2.A.40) family.

Its subcellular location is the membrane. Able to transport with low efficiency all natural purines as well as purine analogs. The chain is Purine permease (uapC) from Emericella nidulans (strain FGSC A4 / ATCC 38163 / CBS 112.46 / NRRL 194 / M139) (Aspergillus nidulans).